The following is a 100-amino-acid chain: NADH-quinone oxidoreductase subunit K (100 aa).

Helical transmembrane passes span 3 to 23 (LNAY…GIFL), 29 to 49 (ISIM…FVAF), and 60 to 80 (IFTF…LAIL).

Belongs to the complex I subunit 4L family. In terms of assembly, NDH-1 is composed of 14 different subunits. Subunits NuoA, H, J, K, L, M, N constitute the membrane sector of the complex.

The protein resides in the cell inner membrane. The enzyme catalyses a quinone + NADH + 5 H(+)(in) = a quinol + NAD(+) + 4 H(+)(out). NDH-1 shuttles electrons from NADH, via FMN and iron-sulfur (Fe-S) centers, to quinones in the respiratory chain. The immediate electron acceptor for the enzyme in this species is believed to be ubiquinone. Couples the redox reaction to proton translocation (for every two electrons transferred, four hydrogen ions are translocated across the cytoplasmic membrane), and thus conserves the redox energy in a proton gradient. The chain is NADH-quinone oxidoreductase subunit K from Magnetococcus marinus (strain ATCC BAA-1437 / JCM 17883 / MC-1).